The primary structure comprises 200 residues: NADH-quinone oxidoreductase subunit I (200 aa).

2 consecutive 4Fe-4S ferredoxin-type domains span residues 73–102 and 112–141; these read RLLE…METT and LNYS…HGGD. Cysteine 82, cysteine 85, cysteine 88, cysteine 92, cysteine 121, cysteine 124, cysteine 127, and cysteine 131 together coordinate [4Fe-4S] cluster.

This sequence belongs to the complex I 23 kDa subunit family. In terms of assembly, NDH-1 is composed of 14 different subunits. Subunits NuoA, H, J, K, L, M, N constitute the membrane sector of the complex. [4Fe-4S] cluster serves as cofactor.

It is found in the cell inner membrane. It catalyses the reaction a quinone + NADH + 5 H(+)(in) = a quinol + NAD(+) + 4 H(+)(out). NDH-1 shuttles electrons from NADH, via FMN and iron-sulfur (Fe-S) centers, to quinones in the respiratory chain. The immediate electron acceptor for the enzyme in this species is believed to be ubiquinone. Couples the redox reaction to proton translocation (for every two electrons transferred, four hydrogen ions are translocated across the cytoplasmic membrane), and thus conserves the redox energy in a proton gradient. The chain is NADH-quinone oxidoreductase subunit I from Campylobacter hominis (strain ATCC BAA-381 / DSM 21671 / CCUG 45161 / LMG 19568 / NCTC 13146 / CH001A).